The primary structure comprises 303 residues: Pseudouridine-5'-phosphate glycosidase (303 aa).

The active-site Proton donor is Glu26. Substrate is bound by residues Lys87 and Val107. Residue Asp139 coordinates Mn(2+). Substrate is bound at residue 141–143 (SAD). Lys160 acts as the Nucleophile in catalysis.

The protein belongs to the pseudouridine-5'-phosphate glycosidase family. In terms of assembly, homotrimer. Mn(2+) serves as cofactor.

The catalysed reaction is D-ribose 5-phosphate + uracil = psi-UMP + H2O. Its function is as follows. Catalyzes the reversible cleavage of pseudouridine 5'-phosphate (PsiMP) to ribose 5-phosphate and uracil. Functions biologically in the cleavage direction, as part of a pseudouridine degradation pathway. This is Pseudouridine-5'-phosphate glycosidase from Saccharopolyspora erythraea (strain ATCC 11635 / DSM 40517 / JCM 4748 / NBRC 13426 / NCIMB 8594 / NRRL 2338).